Reading from the N-terminus, the 572-residue chain is MGCVFGREAATTTTAEAKQAKSSKASSGVVVVGESSVTKSNGVIADDVEKKKNEEANGDKERKSSKGDRRRSTKPNPRLSNPSKHWRGEQVAAGWPSWLSDACGEALNGWVPRKADTFEKIDKIGQGTYSNVYKAKDMLTGKIVALKKVRFDNLEPESVKFMAREILVLRRLDHPNVVKLEGLVTSRMSCSLYLVFQYMDHDLAGLASSPVVKFSESEVKCLMRQLISGLEHCHSRGVLHRDIKGSNLLIDDGGVLKIADFGLATIFDPNHKRPMTSRVVTLWYRAPELLLGATDYGVGIDLWSAGCILAELLAGRPIMPGRTEVEQLHKIYKLCGSPSEDYWKKGKFTHGAIYKPREPYKRSIRETFKDFPPSSLPLIDALLSIEPEDRQTASAALKSEFFTSEPYACEPADLPKYPPSKEIDAKRRDEETRRQRAASKAQGDGARKNRHRDRSNRALPAPEANAELQSNVDRRRLITHANAKSKSEKFPPPHQDGGAMGVPLGASQHIDPTFIPRDMVPSFTSSSFNFSKDEPPTQVQTWSGPLGHPITGVSRKKKDNTKSSKGKRAVVA.

The interval 1-89 (MGCVFGREAA…SNPSKHWRGE (89 aa)) is disordered. Positions 9 to 40 (AATTTTAEAKQAKSSKASSGVVVVGESSVTKS) are enriched in low complexity. Basic and acidic residues predominate over residues 47–67 (DVEKKKNEEANGDKERKSSKG). Positions 74 to 83 (KPNPRLSNPS) are enriched in polar residues. One can recognise a Protein kinase domain in the interval 118–402 (FEKIDKIGQG…ASAALKSEFF (285 aa)). Residues 124–132 (IGQGTYSNV) and Lys-147 each bind ATP. The Proton acceptor role is filled by Asp-242. Disordered regions lie at residues 409-474 (CEPA…NVDR) and 526-572 (SSFN…AVVA). A compositionally biased stretch (basic and acidic residues) spans 419–434 (PSKEIDAKRRDEETRR). Residues 554–572 (SRKKKDNTKSSKGKRAVVA) show a composition bias toward basic residues.

This sequence belongs to the protein kinase superfamily. Ser/Thr protein kinase family.

It catalyses the reaction L-seryl-[protein] + ATP = O-phospho-L-seryl-[protein] + ADP + H(+). The enzyme catalyses L-threonyl-[protein] + ATP = O-phospho-L-threonyl-[protein] + ADP + H(+). The polypeptide is Probable serine/threonine-protein kinase At1g54610 (Arabidopsis thaliana (Mouse-ear cress)).